A 156-amino-acid polypeptide reads, in one-letter code: FAD synthase (156 aa).

ATP contacts are provided by residues 9-10 (TF), 14-17 (HPGH), asparagine 92, and histidine 119.

It belongs to the archaeal FAD synthase family. Homodimer. Requires a divalent metal cation as cofactor.

The enzyme catalyses FMN + ATP + H(+) = FAD + diphosphate. The protein operates within cofactor biosynthesis; FAD biosynthesis; FAD from FMN: step 1/1. Functionally, catalyzes the transfer of the AMP portion of ATP to flavin mononucleotide (FMN) to produce flavin adenine dinucleotide (FAD) coenzyme. This Methanospirillum hungatei JF-1 (strain ATCC 27890 / DSM 864 / NBRC 100397 / JF-1) protein is FAD synthase.